Reading from the N-terminus, the 221-residue chain is PKHD-type hydroxylase P9215_13741 (221 aa).

The Fe2OG dioxygenase domain maps to 80–174 (RIHGTMFTKT…RFVVVGWIES (95 aa)). Fe cation contacts are provided by His-98, Asp-100, and His-155. Position 165 (Arg-165) interacts with 2-oxoglutarate.

Fe(2+) serves as cofactor. The cofactor is L-ascorbate.

This Prochlorococcus marinus (strain MIT 9215) protein is PKHD-type hydroxylase P9215_13741.